The chain runs to 68 residues: U-poneritoxin(01)-Om4b (68 aa).

An N-terminal signal peptide occupies residues 1-25 (MKPSGLTLAFLVVFMMAIMYNSVQA). Residues 26–39 (EALADADAEAFAEA) constitute a propeptide that is removed on maturation.

It belongs to the formicidae venom precursor-01 superfamily. Homo- or heterodimer with PLP4 (AC A0A348G5W0); disulfide-linked. Post-translationally, truncated sequences of this peptide have also been found in the venom. It is possible they have been cleaved in the venom. Expressed by the venom gland.

The protein resides in the secreted. This homodimer composed of two cationic amphipathic alpha-helical peptides has antimicrobial activities against E.coli, S.aureus (MIC=3.1 uM), and S.cerevisiae (MIC=3.1 uM). It also shows histamine-releasing activity (66.4% at 10 uM) and a weak hemolytic activity (10.5% at 50 uM). The sequence is that of U-poneritoxin(01)-Om4b from Odontomachus monticola (Trap-jaw ant).